A 213-amino-acid polypeptide reads, in one-letter code: ATP phosphoribosyltransferase (213 aa).

It belongs to the ATP phosphoribosyltransferase family. Short subfamily. In terms of assembly, heteromultimer composed of HisG and HisZ subunits.

The protein localises to the cytoplasm. It catalyses the reaction 1-(5-phospho-beta-D-ribosyl)-ATP + diphosphate = 5-phospho-alpha-D-ribose 1-diphosphate + ATP. It participates in amino-acid biosynthesis; L-histidine biosynthesis; L-histidine from 5-phospho-alpha-D-ribose 1-diphosphate: step 1/9. In terms of biological role, catalyzes the condensation of ATP and 5-phosphoribose 1-diphosphate to form N'-(5'-phosphoribosyl)-ATP (PR-ATP). Has a crucial role in the pathway because the rate of histidine biosynthesis seems to be controlled primarily by regulation of HisG enzymatic activity. In Nitrosococcus oceani (strain ATCC 19707 / BCRC 17464 / JCM 30415 / NCIMB 11848 / C-107), this protein is ATP phosphoribosyltransferase.